We begin with the raw amino-acid sequence, 497 residues long: Glycerol kinase (497 aa).

Thr-12 contacts ADP. Residues Thr-12, Thr-13, and Ser-14 each contribute to the ATP site. A sn-glycerol 3-phosphate-binding site is contributed by Thr-12. Residue Arg-16 coordinates ADP. Sn-glycerol 3-phosphate contacts are provided by Arg-82, Glu-83, Tyr-134, and Asp-243. Glycerol contacts are provided by Arg-82, Glu-83, Tyr-134, Asp-243, and Gln-244. Residues Thr-265 and Gly-308 each coordinate ADP. Residues Thr-265, Gly-308, Gln-312, and Gly-411 each coordinate ATP. Gly-411 serves as a coordination point for ADP.

Belongs to the FGGY kinase family.

The catalysed reaction is glycerol + ATP = sn-glycerol 3-phosphate + ADP + H(+). Its pathway is polyol metabolism; glycerol degradation via glycerol kinase pathway; sn-glycerol 3-phosphate from glycerol: step 1/1. Inhibited by fructose 1,6-bisphosphate (FBP). Functionally, key enzyme in the regulation of glycerol uptake and metabolism. Catalyzes the phosphorylation of glycerol to yield sn-glycerol 3-phosphate. This Allorhizobium ampelinum (strain ATCC BAA-846 / DSM 112012 / S4) (Agrobacterium vitis (strain S4)) protein is Glycerol kinase.